The primary structure comprises 246 residues: UDP-N-acetyl-D-mannosaminuronic acid transferase (246 aa).

It belongs to the glycosyltransferase 26 family.

It catalyses the reaction UDP-N-acetyl-alpha-D-mannosaminouronate + N-acetyl-alpha-D-glucosaminyl-di-trans,octa-cis-undecaprenyl diphosphate = beta-D-ManNAcA-(1-&gt;4)-alpha-D-GlcNAc-di-trans,octa-cis-undecaprenyl diphosphate + UDP + H(+). It functions in the pathway bacterial outer membrane biogenesis; enterobacterial common antigen biosynthesis. In terms of biological role, catalyzes the synthesis of Und-PP-GlcNAc-ManNAcA (Lipid II), the second lipid-linked intermediate involved in enterobacterial common antigen (ECA) synthesis. The polypeptide is UDP-N-acetyl-D-mannosaminuronic acid transferase (Klebsiella pneumoniae (strain 342)).